A 151-amino-acid polypeptide reads, in one-letter code: Large ribosomal subunit protein bL9 (151 aa).

It belongs to the bacterial ribosomal protein bL9 family.

Binds to the 23S rRNA. This chain is Large ribosomal subunit protein bL9, found in Lactobacillus johnsonii (strain CNCM I-12250 / La1 / NCC 533).